A 323-amino-acid polypeptide reads, in one-letter code: tRNA U34 carboxymethyltransferase (323 aa).

Carboxy-S-adenosyl-L-methionine-binding positions include lysine 91, tryptophan 105, lysine 110, glycine 130, 152–154 (DPT), 181–182 (IE), methionine 196, tyrosine 200, and arginine 315.

This sequence belongs to the class I-like SAM-binding methyltransferase superfamily. CmoB family. In terms of assembly, homotetramer.

It catalyses the reaction carboxy-S-adenosyl-L-methionine + 5-hydroxyuridine(34) in tRNA = 5-carboxymethoxyuridine(34) in tRNA + S-adenosyl-L-homocysteine + H(+). In terms of biological role, catalyzes carboxymethyl transfer from carboxy-S-adenosyl-L-methionine (Cx-SAM) to 5-hydroxyuridine (ho5U) to form 5-carboxymethoxyuridine (cmo5U) at position 34 in tRNAs. In Shigella flexneri serotype 5b (strain 8401), this protein is tRNA U34 carboxymethyltransferase.